The following is a 432-amino-acid chain: MRVLVLGSGVVGTASAYYLARAGFEVVVVDRQPAVAMETSFANAGQVSPGYASPWAAPGVPLKAMKWLLQRHAPLAIKLTGDIDQYLWMAQMLRNCTAARYAVNKERMVRLSEYSRDCLDELRAETGIAYEGRQLGTTQLFRTQAQLDAAAKDIAVLERSGVPYELLDRASIARVEPALAKVSHKLSGALRLPNDQTGDCQLFTTRLAEMARALGVEFRFEQNIQRLEHAGDRIAGVWIDGKLETADRYVLALGSYSPQMLKPLGIRAPVYPLKGYSLTVPISDPAMAPQSTVLDETYKVAITRFDQRIRVGGMAEIAGHDLSLDPRRRETLEMVVGDLYPQGGDPSDAVFWTGLRPATPDGTPIIGATPYRNLFLNTGHGTLGWTMACGSGRVLADLLASKRPQISTEGLDIFRYGKHKENHKHAHPAAAH.

3-17 contacts FAD; sequence VLVLGSGVVGTASAY.

Belongs to the DadA oxidoreductase family. The cofactor is FAD.

It catalyses the reaction a D-alpha-amino acid + A + H2O = a 2-oxocarboxylate + AH2 + NH4(+). It participates in amino-acid degradation; D-alanine degradation; NH(3) and pyruvate from D-alanine: step 1/1. Its function is as follows. Oxidative deamination of D-amino acids. In Stutzerimonas stutzeri (strain A1501) (Pseudomonas stutzeri), this protein is D-amino acid dehydrogenase.